The primary structure comprises 318 residues: Beta-galactosidase small subunit (318 aa).

It belongs to the bacterial beta-galactosidase small subunit family. In terms of assembly, heterodimer of a large (LacL) and a small subunit (LacM).

It catalyses the reaction Hydrolysis of terminal non-reducing beta-D-galactose residues in beta-D-galactosides.. Its function is as follows. Component of a beta-galactosidase. The sequence is that of Beta-galactosidase small subunit from Lactobacillus helveticus (Lactobacillus suntoryeus).